The chain runs to 740 residues: Melanoma-associated antigen D4 (740 aa).

Residues 1-11 show a composition bias toward basic and acidic residues; that stretch reads MAEGSYRKESE. 4 disordered regions span residues 1 to 27, 139 to 208, 242 to 298, and 321 to 377; these read MAEGSYRKESEGYNVEDMDEGSDEVGE, ATHQ…GPST, PAGV…ALAK, and IPEP…ASQP. Acidic residues predominate over residues 14–27; it reads NVEDMDEGSDEVGE. 2 stretches are compositionally biased toward polar residues: residues 141-155 and 162-175; these read HQASGGDTQPMTSAA and PETSVASPHSSRML. The span at 185–207 shows a compositional bias: low complexity; that stretch reads APARSPQPQTSSQAQEAAAEGPS. The span at 321-337 shows a compositional bias: low complexity; that stretch reads IPEPESAAATSQQSAEP. Over residues 354–363 the composition is skewed to acidic residues; sequence DEYESGEEER. One can recognise an MAGE domain in the interval 414–612; that stretch reads LQERANKLVK…REWRAHFLEA (199 aa). The interval 697–722 is disordered; sequence WRAGVSSGTNGAASASMLDGPSTSST.

As to quaternary structure, interacts with TRIM27.

Its function is as follows. May enhance ubiquitin ligase activity of RING-type zinc finger-containing E3 ubiquitin-protein ligases. Proposed to act through recruitment and/or stabilization of the Ubl-conjugating enzyme (E2) at the E3:substrate complex. The chain is Melanoma-associated antigen D4 (MAGED4) from Bos taurus (Bovine).